Reading from the N-terminus, the 269-residue chain is MESLNILISNDDGVFAEGIRALAKSALKKGHKVTVVCPDQERSATGHGLTLQSPLRVERADELFDKGIKAWGCSGTPADCVKLALSELLDKKPDLVLSGINHGPNLGTDIFCSGTVAAAMEGTLENVPSMAISVASFKWKNFEFAGEIAMNIAEQAIKDSWPKSLLLNLNIPPCERNKIKELSWTRLSIRKYKNQFSKREDPRGDDYYWLAGEAVLDLKSKGDGPKNWPSDVSQIQENKISLTPVEPDLFWRGSIDVLPKINTSFINAS.

Residues Asp-11, Asp-12, Ser-43, and Asn-101 each contribute to the a divalent metal cation site.

It belongs to the SurE nucleotidase family. The cofactor is a divalent metal cation.

The protein resides in the cytoplasm. The catalysed reaction is a ribonucleoside 5'-phosphate + H2O = a ribonucleoside + phosphate. In terms of biological role, nucleotidase that shows phosphatase activity on nucleoside 5'-monophosphates. This Prochlorococcus marinus subsp. pastoris (strain CCMP1986 / NIES-2087 / MED4) protein is 5'-nucleotidase SurE.